Reading from the N-terminus, the 424-residue chain is CinA-like protein (424 aa).

This sequence belongs to the CinA family.

This Prochlorococcus marinus (strain AS9601) protein is CinA-like protein.